The sequence spans 611 residues: Rop guanine nucleotide exchange factor 5 (611 aa).

The segment at 1 to 62 (MENLVKSCAG…PPPPPSQILG (62 aa)) is disordered. The span at 34-51 (STSGASYESSSTTTVASS) shows a compositional bias: low complexity. The PRONE domain maps to 93 to 477 (FKAKEMNSAD…DLTKQSDDNN (385 aa)). 2 disordered regions span residues 513 to 541 (TTPGFSPSMISPKKGERRTPYSSKDTNKI) and 588 to 611 (DVEEEKKRNSTSVHQKGPPKYTVS). Residues 525–541 (KKGERRTPYSSKDTNKI) are compositionally biased toward basic and acidic residues.

Guanine-nucleotide exchange factor (GEF) that acts as an activator of Rop (Rho of plants) GTPases by promoting the exchange of GDP for GTP. The chain is Rop guanine nucleotide exchange factor 5 (ROPGEF5) from Arabidopsis thaliana (Mouse-ear cress).